Reading from the N-terminus, the 363-residue chain is Ribosomal RNA large subunit methyltransferase M (363 aa).

Residues S194, 227–230, D246, D266, and D284 contribute to the S-adenosyl-L-methionine site; that span reads CPGG. K313 acts as the Proton acceptor in catalysis.

This sequence belongs to the class I-like SAM-binding methyltransferase superfamily. RNA methyltransferase RlmE family. RlmM subfamily. Monomer.

Its subcellular location is the cytoplasm. It catalyses the reaction cytidine(2498) in 23S rRNA + S-adenosyl-L-methionine = 2'-O-methylcytidine(2498) in 23S rRNA + S-adenosyl-L-homocysteine + H(+). Catalyzes the 2'-O-methylation at nucleotide C2498 in 23S rRNA. The protein is Ribosomal RNA large subunit methyltransferase M of Haemophilus influenzae (strain PittGG).